A 111-amino-acid chain; its full sequence is Probable 4-amino-4-deoxy-L-arabinose-phosphoundecaprenol flippase subunit ArnE (111 aa).

Helical transmembrane passes span 36–56 (IVLW…LWLL), 61–81 (VPVG…TLAA), and 88–108 (PVSP…VILG). The 70-residue stretch at 40–109 (LGLALACIGL…IIGGIVILGS (70 aa)) folds into the EamA domain.

It belongs to the ArnE family. Heterodimer of ArnE and ArnF.

It is found in the cell inner membrane. It functions in the pathway bacterial outer membrane biogenesis; lipopolysaccharide biosynthesis. Its function is as follows. Translocates 4-amino-4-deoxy-L-arabinose-phosphoundecaprenol (alpha-L-Ara4N-phosphoundecaprenol) from the cytoplasmic to the periplasmic side of the inner membrane. This Shigella flexneri serotype 5b (strain 8401) protein is Probable 4-amino-4-deoxy-L-arabinose-phosphoundecaprenol flippase subunit ArnE.